Here is a 392-residue protein sequence, read N- to C-terminus: V-type proton ATPase subunit C (392 aa).

Position 2 is an N-acetylalanine (Ala2).

This sequence belongs to the V-ATPase C subunit family. V-ATPase is a heteromultimeric enzyme composed of a peripheral catalytic V1 complex (components A to H) attached to an integral membrane V0 proton pore complex (components: a, c, c', c'', d, e, f and VOA1). Interacts directly with VMA4.

It is found in the vacuole membrane. Functionally, subunit of the V1 complex of vacuolar(H+)-ATPase (V-ATPase), a multisubunit enzyme composed of a peripheral complex (V1) that hydrolyzes ATP and a membrane integral complex (V0) that translocates protons. V-ATPase is responsible for acidifying and maintaining the pH of intracellular compartments. Subunit C is necessary for the assembly of the catalytic sector of the enzyme and is likely to have a specific function in its catalytic activity. Reversibly leaves the enzyme after glucose depletion, causing the catalytic subcomplex V1 to detach from the V0 section. This chain is V-type proton ATPase subunit C, found in Saccharomyces cerevisiae (strain ATCC 204508 / S288c) (Baker's yeast).